Reading from the N-terminus, the 380-residue chain is Kappa-type opioid receptor (380 aa).

Over 1–57 (MESPIQIFRGDPGPTCSPSACLLPNSSSWFPNWAESDSNGSVGSEDQQLESAHISPA) the chain is Extracellular. 2 N-linked (GlcNAc...) asparagine glycosylation sites follow: asparagine 25 and asparagine 39. A helical transmembrane segment spans residues 58–85 (IPVIITAVYSVVFVVGLVGNSLVMFVII). The Cytoplasmic portion of the chain corresponds to 86–95 (RYTKMKTATN). The helical transmembrane segment at 96-119 (IYIFNLALADALVTTTMPFQSAVY) threads the bilayer. Residues 120–132 (LMNSWPFGDVLCK) lie on the Extracellular side of the membrane. A disulfide bond links cysteine 131 and cysteine 210. The chain crosses the membrane as a helical span at residues 133–154 (IVISIDYYNMFTSIFTLTMMSV). Over 155–173 (DRYIAVCHPVKALDFRTPL) the chain is Cytoplasmic. A helical transmembrane segment spans residues 174 to 196 (KAKIINICIWLLASSVGISAIVL). Over 197-222 (GGTKVREDVDVIECSLQFPDDEYSWW) the chain is Extracellular. Residues 223–247 (DLFMKICVFVFAFVIPVLIIIVCYT) traverse the membrane as a helical segment. The Cytoplasmic portion of the chain corresponds to 248–274 (LMILRLKSVRLLSGSREKDRNLRRITK). The chain crosses the membrane as a helical span at residues 275-296 (LVLVVVAVFIICWTPIHIFILV). The Extracellular portion of the chain corresponds to 297–311 (EALGSTSHSTAALSS). The helical transmembrane segment at 312–333 (YYFCIALGYTNSSLNPVLYAFL) threads the bilayer. Over 334 to 380 (DENFKRCFRDFCFPIKMRMERQSTNRVRNTVQDPASMRDVGGMNKPV) the chain is Cytoplasmic. A lipid anchor (S-palmitoyl cysteine) is attached at cysteine 345.

The protein belongs to the G-protein coupled receptor 1 family. Interacts with NHERF1. Interacts with GABARAPL1. In terms of tissue distribution, detected in brain (at protein level). Brain (neocortex, hippocampus, amygdala, medial habenula, hypothalamus, locus ceruleus, and parabrachial nucleus).

Its subcellular location is the cell membrane. Functionally, G-protein coupled opioid receptor that functions as a receptor for endogenous alpha-neoendorphins and dynorphins, but has low affinity for beta-endorphins. Also functions as a receptor for various synthetic opioids and for the psychoactive diterpene salvinorin A. Ligand binding causes a conformation change that triggers signaling via guanine nucleotide-binding proteins (G proteins) and modulates the activity of down-stream effectors, such as adenylate cyclase. Signaling leads to the inhibition of adenylate cyclase activity. Inhibits neurotransmitter release by reducing calcium ion currents and increasing potassium ion conductance. Plays a role in the perception of pain. Plays a role in mediating reduced physical activity upon treatment with synthetic opioids. Plays a role in the regulation of salivation in response to synthetic opioids. May play a role in arousal and regulation of autonomic and neuroendocrine functions. This chain is Kappa-type opioid receptor (Oprk1), found in Mus musculus (Mouse).